Here is a 502-residue protein sequence, read N- to C-terminus: Glycerol kinase (502 aa).

Position 14 (threonine 14) interacts with ADP. Threonine 14, threonine 15, and serine 16 together coordinate ATP. Threonine 14 contributes to the sn-glycerol 3-phosphate binding site. Arginine 18 contacts ADP. Sn-glycerol 3-phosphate is bound by residues arginine 84, glutamate 85, tyrosine 136, and aspartate 246. Residues arginine 84, glutamate 85, tyrosine 136, aspartate 246, and glutamine 247 each contribute to the glycerol site. ADP-binding residues include threonine 268 and glycine 311. Threonine 268, glycine 311, glutamine 315, and glycine 412 together coordinate ATP. ADP is bound by residues glycine 412 and asparagine 416.

It belongs to the FGGY kinase family. Homotetramer and homodimer (in equilibrium). Heterodimer with EIIA-Glc. Binds 1 zinc ion per glycerol kinase EIIA-Glc dimer. The zinc ion is important for dimerization.

It carries out the reaction glycerol + ATP = sn-glycerol 3-phosphate + ADP + H(+). It functions in the pathway polyol metabolism; glycerol degradation via glycerol kinase pathway; sn-glycerol 3-phosphate from glycerol: step 1/1. With respect to regulation, activity of this regulatory enzyme is affected by several metabolites. Allosterically and non-competitively inhibited by fructose 1,6-bisphosphate (FBP) and unphosphorylated phosphocarrier protein EIIA-Glc (III-Glc), an integral component of the bacterial phosphotransferase (PTS) system. Key enzyme in the regulation of glycerol uptake and metabolism. Catalyzes the phosphorylation of glycerol to yield sn-glycerol 3-phosphate. The chain is Glycerol kinase from Citrobacter koseri (strain ATCC BAA-895 / CDC 4225-83 / SGSC4696).